A 103-amino-acid polypeptide reads, in one-letter code: Putative membrane protein insertion efficiency factor (103 aa).

This sequence belongs to the UPF0161 family.

Its subcellular location is the cell inner membrane. In terms of biological role, could be involved in insertion of integral membrane proteins into the membrane. In Chlamydia caviae (strain ATCC VR-813 / DSM 19441 / 03DC25 / GPIC) (Chlamydophila caviae), this protein is Putative membrane protein insertion efficiency factor.